The primary structure comprises 191 residues: Fe/S biogenesis protein NfuA (191 aa).

[4Fe-4S] cluster-binding residues include Cys-149 and Cys-152.

The protein belongs to the NfuA family. In terms of assembly, homodimer. It depends on [4Fe-4S] cluster as a cofactor.

Its function is as follows. Involved in iron-sulfur cluster biogenesis. Binds a 4Fe-4S cluster, can transfer this cluster to apoproteins, and thereby intervenes in the maturation of Fe/S proteins. Could also act as a scaffold/chaperone for damaged Fe/S proteins. This chain is Fe/S biogenesis protein NfuA, found in Yersinia pseudotuberculosis serotype O:1b (strain IP 31758).